Here is a 131-residue protein sequence, read N- to C-terminus: Amicyanin (131 aa).

Positions 1–26 (MISATKIRSCLAACVLAAFGATGALA) are cleaved as a signal peptide. Residues 27–131 (DKATIPSESP…PFMRGKVVVE (105 aa)) form the Plastocyanin-like domain. Cu cation-binding residues include H79, C118, H121, and M124.

Cu cation serves as cofactor.

The protein resides in the periplasm. It participates in one-carbon metabolism; methylamine degradation. In terms of biological role, primary acceptor of electrons from methylamine dehydrogenase. Passes those electrons on either a soluble cytochrome c or to pseudoazurin. This Paracoccus denitrificans protein is Amicyanin (mauC).